The chain runs to 202 residues: Holliday junction branch migration complex subunit RuvA (202 aa).

A domain I region spans residues 1–63; the sequence is MIASLRGTVL…EDSMTLYGFT (63 aa). The interval 64-142 is domain II; it reads SQDDRDMFHV…AFAPAESADL (79 aa). A flexible linker region spans residues 143 to 148; the sequence is SSAAPA. Residues 149-202 form a domain III region; the sequence is AAGPVVEDVVEALIGLGFTDKMARPVVESVVAEQPDAATPVVLRAALSQLGAKK.

It belongs to the RuvA family. As to quaternary structure, homotetramer. Forms an RuvA(8)-RuvB(12)-Holliday junction (HJ) complex. HJ DNA is sandwiched between 2 RuvA tetramers; dsDNA enters through RuvA and exits via RuvB. An RuvB hexamer assembles on each DNA strand where it exits the tetramer. Each RuvB hexamer is contacted by two RuvA subunits (via domain III) on 2 adjacent RuvB subunits; this complex drives branch migration. In the full resolvosome a probable DNA-RuvA(4)-RuvB(12)-RuvC(2) complex forms which resolves the HJ.

It localises to the cytoplasm. In terms of biological role, the RuvA-RuvB-RuvC complex processes Holliday junction (HJ) DNA during genetic recombination and DNA repair, while the RuvA-RuvB complex plays an important role in the rescue of blocked DNA replication forks via replication fork reversal (RFR). RuvA specifically binds to HJ cruciform DNA, conferring on it an open structure. The RuvB hexamer acts as an ATP-dependent pump, pulling dsDNA into and through the RuvAB complex. HJ branch migration allows RuvC to scan DNA until it finds its consensus sequence, where it cleaves and resolves the cruciform DNA. This Corynebacterium aurimucosum (strain ATCC 700975 / DSM 44827 / CIP 107346 / CN-1) (Corynebacterium nigricans) protein is Holliday junction branch migration complex subunit RuvA.